We begin with the raw amino-acid sequence, 360 residues long: Photosystem II protein D1 3 (360 aa).

The next 3 membrane-spanning stretches (helical) occupy residues 29–46, 118–133, and 142–156; these read YVGW…TATI, HFLL…EWEL, and WIAV…AATA. Chlorophyll a is bound at residue His118. Pheophytin a is bound at residue Tyr126. [CaMn4O5] cluster is bound by residues Asp170 and Glu189. A helical membrane pass occupies residues 197–218; sequence FHMLGVAGVFGGALFSAMHGSL. Chlorophyll a is bound at residue His198. A quinone is bound by residues His215 and 264–265; that span reads SF. His215 contacts Fe cation. His272 is a binding site for Fe cation. A helical membrane pass occupies residues 274–288; it reads FLAAWPVIGIWFASL. [CaMn4O5] cluster is bound by residues His332, Glu333, Asp342, and Ala344. The propeptide occupies 345-360; sequence AGDQAPVALQAPAING.

The protein belongs to the reaction center PufL/M/PsbA/D family. In terms of assembly, PSII is composed of 1 copy each of membrane proteins PsbA, PsbB, PsbC, PsbD, PsbE, PsbF, PsbH, PsbI, PsbJ, PsbK, PsbL, PsbM, PsbT, PsbX, PsbY, PsbZ, Psb30/Ycf12, peripheral proteins PsbO, CyanoQ (PsbQ), PsbU, PsbV and a large number of cofactors. It forms dimeric complexes. It depends on The D1/D2 heterodimer binds P680, chlorophylls that are the primary electron donor of PSII, and subsequent electron acceptors. It shares a non-heme iron and each subunit binds pheophytin, quinone, additional chlorophylls, carotenoids and lipids. D1 provides most of the ligands for the Mn4-Ca-O5 cluster of the oxygen-evolving complex (OEC). There is also a Cl(-1) ion associated with D1 and D2, which is required for oxygen evolution. The PSII complex binds additional chlorophylls, carotenoids and specific lipids. as a cofactor. In terms of processing, tyr-161 forms a radical intermediate that is referred to as redox-active TyrZ, YZ or Y-Z. Post-translationally, C-terminally processed by CtpA; processing is essential to allow assembly of the oxygen-evolving complex and thus photosynthetic growth.

The protein resides in the cellular thylakoid membrane. The enzyme catalyses 2 a plastoquinone + 4 hnu + 2 H2O = 2 a plastoquinol + O2. In terms of biological role, photosystem II (PSII) is a light-driven water:plastoquinone oxidoreductase that uses light energy to abstract electrons from H(2)O, generating O(2) and a proton gradient subsequently used for ATP formation. It consists of a core antenna complex that captures photons, and an electron transfer chain that converts photonic excitation into a charge separation. The D1/D2 (PsbA/PsbD) reaction center heterodimer binds P680, the primary electron donor of PSII as well as several subsequent electron acceptors. The chain is Photosystem II protein D1 3 from Picosynechococcus sp. (strain ATCC 27264 / PCC 7002 / PR-6) (Agmenellum quadruplicatum).